Consider the following 192-residue polypeptide: Cytochrome b-245 light chain (192 aa).

At 2-7 the chain is on the cytoplasmic side; it reads GQIEWA. A helical transmembrane segment spans residues 8-30; it reads MWANEQALASGLILITGGIVATA. Residues 31 to 35 lie on the Extracellular side of the membrane; it reads GQFAQ. The chain crosses the membrane as a helical span at residues 36 to 53; sequence WYLGAYSIAAGVLICLLE. Residues 54–69 are Cytoplasmic-facing; it reads YPRGKRSKGSTMERCG. An intramembrane segment occupies 70-80; it reads QKYLTRAVKVF. The Cytoplasmic segment spans residues 81 to 86; the sequence is GPLTSN. The helical transmembrane segment at 87–104 threads the bilayer; that stretch reads YYIRAFLHLGLSVPAGFL. A topological domain (extracellular) is located at residue L105. Residues 106-126 traverse the membrane as a helical segment; the sequence is ATILGTACLAIASSIYLLAAI. At 127-192 the chain is on the cytoplasmic side; that stretch reads HGEHWTPIET…NPMPVTDEVV (66 aa). The interval 134 to 192 is disordered; sequence IETKPKERPQVGGTIKQPPSNPPPRPPAEARKKPSEEEVAGVPGGGPQENPMPVTDEVV. At T147 the chain carries Phosphothreonine. K149 participates in a covalent cross-link: Glycyl lysine isopeptide (Lys-Gly) (interchain with G-Cter in ubiquitin). S168 bears the Phosphoserine mark.

It belongs to the p22phox family. In terms of assembly, component of the phagocyte NADPH oxidase core complex/cytochrome b558 complex, composed of CYBB (heavy chain (beta)) and CYBA (light chain (alpha)). Component of the phagocyte NADPH oxidase complex composed of an obligatory core heterodimer formed by the membrane proteins CYBA and CYBB and the cytosolic regulatory subunits NCF1/p47-phox, NCF2/p67-phox, NCF4/p40-phox and the small GTPase RAC1 or RAC2. Interacts with NCF1 (via SH3 domain). Interacts with SH3PXD2A. Interacts with DUOX1, DUOX2 and TPO. Interacts with NOX4; this interaction mediates superoxide generation. Interacts with calprotectin (S100A8/9). Interacts with GBP7. Interacts with NOXO1. Forms a heterodimer with NOX3 and is essential for activity and cell membrane localization of NOX3. Interacts with NOX1. Post-translationally, phosphorylation at Thr-147 enhances NADPH oxidase activity by promoting NCF1/p47-phox binding. In terms of processing, ubiquitinated at Lys-149 likely by RNF145.

The protein localises to the cell membrane. Subunit of NADPH oxidase complexes that is required for the NADPH oxidase activity that generates, in various cell types, superoxide from molecular oxygen utilizing NADPH as an electron donor. Subunit of the phagocyte NADPH oxidase complex that mediates the transfer of electrons from cytosolic NADPH to O2 to produce the superoxide anion (O2(-)). In the activated complex, electrons are first transferred from NADPH to flavin adenine dinucleotide (FAD) and subsequently transferred via two heme molecules to molecular oxygen, producing superoxide through an outer-sphere reaction. Activation of the NADPH oxidase complex is initiated by the assembly of cytosolic subunits of the NADPH oxidase complex with the core NADPH oxidase complex to form a complex at the plasma membrane or phagosomal membrane. This activation process is initiated by phosphorylation dependent binding of the cytosolic NCF1/p47-phox subunit to the C-terminus of CYBA/p22-phox. Aassociates with NOX3 to form a functional NADPH oxidase constitutively generating superoxide. The polypeptide is Cytochrome b-245 light chain (Tursiops truncatus (Atlantic bottle-nosed dolphin)).